A 396-amino-acid chain; its full sequence is S-adenosylmethionine synthase (396 aa).

Residue His-14 coordinates ATP. Asp-16 serves as a coordination point for Mg(2+). Residue Glu-42 participates in K(+) binding. L-methionine contacts are provided by Glu-55 and Gln-98. Residues Gln-98–Glu-108 are flexible loop. Residues Asp-174–Lys-176, Arg-241–Phe-242, Asp-250, Arg-256–Lys-257, Ala-273, and Lys-277 contribute to the ATP site. Asp-250 contributes to the L-methionine binding site. Lys-281 serves as a coordination point for L-methionine.

This sequence belongs to the AdoMet synthase family. Homotetramer; dimer of dimers. The cofactor is Mg(2+). K(+) is required as a cofactor.

It is found in the cytoplasm. It carries out the reaction L-methionine + ATP + H2O = S-adenosyl-L-methionine + phosphate + diphosphate. The protein operates within amino-acid biosynthesis; S-adenosyl-L-methionine biosynthesis; S-adenosyl-L-methionine from L-methionine: step 1/1. Its function is as follows. Catalyzes the formation of S-adenosylmethionine (AdoMet) from methionine and ATP. The overall synthetic reaction is composed of two sequential steps, AdoMet formation and the subsequent tripolyphosphate hydrolysis which occurs prior to release of AdoMet from the enzyme. In Fervidobacterium nodosum (strain ATCC 35602 / DSM 5306 / Rt17-B1), this protein is S-adenosylmethionine synthase.